Reading from the N-terminus, the 297-residue chain is Mitochondrial citrate transporter A (297 aa).

Solcar repeat units follow at residues 12–91 (PSSL…LKSL), 102–188 (PKTV…LKQM), and 199–286 (LGTA…TMDA). Transmembrane regions (helical) follow at residues 18 to 31 (IIAG…EIAI), 61 to 81 (SQWY…AGIR), 99 to 119 (ISGP…SLLA), 160 to 180 (FFQG…TRFS), 192 to 212 (YVAP…GIAG), and 251 to 272 (KDEG…LIMS).

Belongs to the mitochondrial carrier (TC 2.A.29) family.

It is found in the mitochondrion inner membrane. It catalyses the reaction citrate(in) + H(+)(in) = citrate(out) + H(+)(out). Its function is as follows. Mitochondrial transporter that mediates citrate export from mitochondria to cytoplasm. Both ctpA, ctpB, and ctpD play important roles in citric acid transport across the mitochondrial membrane and function in a redundant manner. The sequence is that of Mitochondrial citrate transporter A from Aspergillus niger (strain ATCC 1015 / CBS 113.46 / FGSC A1144 / LSHB Ac4 / NCTC 3858a / NRRL 328 / USDA 3528.7).